The primary structure comprises 177 residues: Prorelaxin (177 aa).

Positions M1–A25 are cleaved as a signal peptide. Disulfide bonds link C34/C164, C46/C177, and C163/C168. Residues Q63–P149 constitute a propeptide, connecting peptide.

The protein belongs to the insulin family. Heterodimer of a B chain and an A chain linked by two disulfide bonds. In terms of tissue distribution, placenta; syncytiotrophoblast.

Its subcellular location is the secreted. Functionally, relaxin is an ovarian hormone that acts with estrogen to produce dilatation of the birth canal in many mammals. The sequence is that of Prorelaxin (RLN) from Canis lupus familiaris (Dog).